A 120-amino-acid chain; its full sequence is uncharacterized protein (120 aa).

The chain crosses the membrane as a helical span at residues 47–63; it reads VSIVIGLCTVLISAGAG.

It is found in the membrane. This is an uncharacterized protein from Sinorhizobium fredii (strain NBRC 101917 / NGR234).